Reading from the N-terminus, the 338-residue chain is MRLLKQLDNNITLTQSETTQFITYLTNPEINVEDKVDLLTQFTKKEIKQQELTYVVNSLIQTMYPNQPTYEGSICVCGTGGDKSNSFNISTTVSFIVASAGIPVIKHGNRSITSHSGSTDLLNELGIKTTKVSEVPLQIEEQGLAFISAMESYPIMKYIQPVRKMISTPTIFNIVGPLINPFKLTYQVLGVYDPSRLYMIAQTLKDLGRRRAIVLHGANGMDEATLSGNNEVYELNENGDITHYFINAKDYGLKVASNQDLQGGSPKENKMITLDILSGDDKTCRRDVVVLNAALALYVSEKVDTIASGISLATILIDSGRAMVQFMKMRGDICDDIK.

Residues G78, 81 to 82 (GD), S86, 88 to 91 (NIST), 106 to 114 (KHGNRSITS), and S118 contribute to the 5-phospho-alpha-D-ribose 1-diphosphate site. An anthranilate-binding site is contributed by G78. Position 90 (S90) interacts with Mg(2+). Residue N109 coordinates anthranilate. Residue R163 coordinates anthranilate. The Mg(2+) site is built by D222 and E223.

The protein belongs to the anthranilate phosphoribosyltransferase family. As to quaternary structure, homodimer. It depends on Mg(2+) as a cofactor.

The enzyme catalyses N-(5-phospho-beta-D-ribosyl)anthranilate + diphosphate = 5-phospho-alpha-D-ribose 1-diphosphate + anthranilate. The protein operates within amino-acid biosynthesis; L-tryptophan biosynthesis; L-tryptophan from chorismate: step 2/5. In terms of biological role, catalyzes the transfer of the phosphoribosyl group of 5-phosphorylribose-1-pyrophosphate (PRPP) to anthranilate to yield N-(5'-phosphoribosyl)-anthranilate (PRA). The polypeptide is Anthranilate phosphoribosyltransferase (Staphylococcus haemolyticus (strain JCSC1435)).